Reading from the N-terminus, the 367-residue chain is Probable cysteine protease RD19D (367 aa).

Positions 1 to 22 (MVAKALAQLITCIILFCHVVAS) are cleaved as a signal peptide. A propeptide spans 23–136 (VEDLTIRQVT…AEAPMVEVDG (114 aa)) (activation peptide). The N-linked (GlcNAc...) asparagine glycan is linked to Asn61. 2 disulfide bridges follow: Cys158–Cys208 and Cys192–Cys241. Residue Cys161 is part of the active site. Residue Asn254 is glycosylated (N-linked (GlcNAc...) asparagine). A disulfide bridge links Cys297 with Cys352. Catalysis depends on residues His304 and Asn331.

This sequence belongs to the peptidase C1 family.

Probable thiol protease. In Arabidopsis thaliana (Mouse-ear cress), this protein is Probable cysteine protease RD19D.